Reading from the N-terminus, the 105-residue chain is RxLR effector protein PITG_18670 (105 aa).

The signal sequence occupies residues 1-21 (MRSIFYFALAFAALTCSNASA). The RxLR-dEER motif lies at 39-57 (RSLRVAGQEVARGDRGEEI).

Belongs to the RxLR effector family.

The protein localises to the secreted. Its subcellular location is the host nucleus. The protein resides in the host nucleolus. It localises to the host cytoplasm. Its function is as follows. Effector that enhances P.infestans colonization of Nicotiana benthamiana leaves. The chain is RxLR effector protein PITG_18670 from Phytophthora infestans (strain T30-4) (Potato late blight agent).